The chain runs to 3459 residues: uncharacterized protein (3459 aa).

Residues 158-167 (NDDDWIFNED) show a composition bias toward acidic residues. Disordered regions lie at residues 158 to 230 (NDDD…NNNN) and 400 to 447 (YGYI…NDEK). The span at 168 to 184 (DEKKNKNNDGNDNRYDY) shows a compositional bias: basic and acidic residues. A compositionally biased stretch (low complexity) spans 185 to 201 (NDLQNNNNNDNNKYDYN). Basic and acidic residues predominate over residues 204–221 (DDEKKNKNNDGDDNKYDY). Acidic residues predominate over residues 406–443 (DNDDGDDYNDDNDNDDNYNDDNYNDDNYNDDNYNDDNY). The stretch at 771–851 (VNEKKKGENE…NEMNKDEENE (81 aa)) forms a coiled coil. Residues 1059–1079 (LIYMIYLFFTYKKYDLLLMFI) form a helical membrane-spanning segment. 3 disordered regions span residues 1148-1187 (RRQE…NDYD), 1399-1467 (IPTQ…NDDD), and 1711-1733 (QKKK…NKEN). Positions 1404–1463 (DKNETDEGNKNETDEGDKNETDEGDKNETDEGNKNETEEIYKNETDEGNKNETEEIYKND) are enriched in basic and acidic residues. 2 helical membrane passes run 2059 to 2079 (FLLF…IFFF) and 2197 to 2217 (IIQC…DFLF). Disordered regions lie at residues 2582-2644 (IYKD…DNNN) and 2776-2835 (GRIW…DKGD). Over residues 2592-2629 (DNNDDDNINDDDNINDDDNINDDDNNNDDDNNNDDNND) the composition is skewed to acidic residues. The span at 2779-2821 (WKREENGEKKKNEKNESEKNERNEKNEKNEKHEKHEKHEKNEK) shows a compositional bias: basic and acidic residues. The stretch at 2785-2820 (GEKKKNEKNESEKNERNEKNEKNEKHEKHEKHEKNE) forms a coiled coil. The next 2 helical transmembrane spans lie at 3229–3249 (LFII…SFIL) and 3296–3316 (LLFF…NINS).

Its subcellular location is the membrane. This is an uncharacterized protein from Plasmodium falciparum (isolate 3D7).